Reading from the N-terminus, the 514-residue chain is Cytochrome P450 monooxygenase MO6277 (514 aa).

The chain crosses the membrane as a helical span at residues 6–26 (LTVLALLGGTLLLYCSGLVIY). Cys-457 contributes to the heme binding site.

The protein belongs to the cytochrome P450 family. The cofactor is heme.

It is found in the membrane. The enzyme catalyses polyporic acid + reduced [NADPH--hemoprotein reductase] + O2 = ascocorynin + oxidized [NADPH--hemoprotein reductase] + H2O + H(+). It participates in secondary metabolite biosynthesis. Cytochrome P450 monooxygenase that hydroxylates polyporic acid produced by the nonribosomal peptide synthetase acyN to produce the less toxic metabolite ascocorynin. The hydrophobic substrate polyporic acid might approach the active site from the membrane and, after hydroxylation into ascocorynin, leaves into the cytoplasm. MO6277 appears vital to avoid high-level accumulation of polyporic acid in the fungal membrane. In Ascocoryne sarcoides (Purple jellydisc fungus), this protein is Cytochrome P450 monooxygenase MO6277.